The primary structure comprises 80 residues: MSEVKVFEVRGTFRMGDEPRQPFTRQVPATSEEEALEKVYSDLGSEHGVSRMEIQIEEIREIDPSKVEDPILRRLLGVEE.

Belongs to the eukaryotic ribosomal protein eL20 family. As to quaternary structure, part of the 50S ribosomal subunit. Binds 23S rRNA.

This is Large ribosomal subunit protein eL20 from Methanopyrus kandleri (strain AV19 / DSM 6324 / JCM 9639 / NBRC 100938).